A 2547-amino-acid chain; its full sequence is Lovastatin diketide synthase mokB (2547 aa).

Residues 10-430 (PTPIAVVGMG…GANAHAIVER (421 aa)) form the Ketosynthase family 3 (KS3) domain. Residues C183, H318, and H353 each act as for beta-ketoacyl synthase activity in the active site. The segment at 545–890 (VFTGQGAQWF…MDLLQGGYPV (346 aa)) is acyl and malonyl transferase. S635 acts as the For malonyltransferase activity in catalysis. The segment at 941–1079 (HDLIGVQEPL…GLIRAQVDHP (139 aa)) is N-terminal hotdog fold. The 312-residue stretch at 941 to 1252 (HDLIGVQEPL…FQSLGAVISD (312 aa)) folds into the PKS/mFAS DH domain. The active-site Proton acceptor; for dehydratase activity is H973. Positions 973 to 985 (HVVGSRILFPGAG) are dehydratase-like. Positions 1095-1252 (SRKMAPQDLW…FQSLGAVISD (158 aa)) are C-terminal hotdog fold. D1160 (proton donor; for dehydratase activity) is an active-site residue. C1340 and C1379 form a disulfide bridge. The segment at 1510-1547 (YDVVLACQVLHATSNMQRTLNNVRKLLKPGGKLILVET) is methyltransferase. The region spanning 2459–2541 (ASTEEEATAL…EVAEVVVKKY (83 aa)) is the Carrier domain. S2501 carries the post-translational modification O-(pantetheine 4'-phosphoryl)serine.

The cofactor is pantetheine 4'-phosphate.

It catalyses the reaction holo-[2-methylbutanoate polyketide synthase] + 2 malonyl-CoA + S-adenosyl-L-methionine + 2 NADPH + 3 H(+) = (S)-2-methylbutanoyl-[2-methylbutanoate polyketide synthase] + S-adenosyl-L-homocysteine + 2 CO2 + 2 NADP(+) + 2 CoA + H2O. Its pathway is polyketide biosynthesis; lovastatin biosynthesis. In terms of biological role, diketide synthase; part of the gene cluster that mediates the biosynthesis of monakolin K, also known as lovastatin, and which acts as a potent competitive inhibitor of HMG-CoA reductase. Monakolin K biosynthesis is performed in two stages. The first stage is catalyzed by the nonaketide synthase mokA, which belongs to type I polyketide synthases and catalyzes the iterative nine-step formation of the polyketide. This PKS stage completed by the action of dehydrogenase mokE, which catalyzes the NADPH-dependent reduction of the unsaturated tetra-, penta- and heptaketide intermediates that arise during the mokA-mediated biosynthesis of the nonaketide chain and leads to dihydromonacolin L. Covalently bound dihydromonacolin L is released from mokA by the mokD esterase. Conversion of dihydromonacolin L into monacolin L and then monacolin J is subsequently performed with the participation of molecular oxygen and P450 monoogygenase mokC. Finally, mokF performs the conversion of monacoline J to monacoline K through the addition of the side-chain diketide moiety (2R)-2-methylbutanoate produced by the diketide synthase mokB. The protein is Lovastatin diketide synthase mokB of Monascus pilosus (Red mold).